A 317-amino-acid chain; its full sequence is Ubiquinone biosynthesis protein COQ9-A, mitochondrial (317 aa).

The transit peptide at 1–46 directs the protein to the mitochondrion; that stretch reads MAASVTRVLKGAGGRQLLLMVARRRPVLMQPFLLMPRKFWVSSALR. Positions 50–97 are disordered; the sequence is QRQPPFSASSTHAETQGHAEEQYQQKQPPPRYTDQAGEESEGYESEEQ. Residues 53–63 show a composition bias toward polar residues; it reads PPFSASSTHAE. Acidic residues predominate over residues 85-96; it reads AGEESEGYESEE. Arg-243 provides a ligand contact to a 1,2-diacylglycero-3-phosphoethanolamine.

It belongs to the COQ9 family. As to quaternary structure, homodimer. Heterodimer; two heterodimers of COQ7:COQ9 come together on the same side of the lipid pseudo-bilayer and form a curved tetramer with a hydrophobic surface suitable for membrane interaction. These two tetramers assemble into a soluble octamer with a pseudo-bilayer of lipids captured within. Interacts with COQ7; this interaction allows ubiquinone (CoQ) isoprene intermediates presentation to COQ7 and facilitates the COQ7-mediated hydroxylase step.

The protein localises to the mitochondrion. Its pathway is cofactor biosynthesis; ubiquinone biosynthesis. Functionally, membrane-associated protein that warps the membrane surface to access and bind aromatic isoprenes with high specificity, including ubiquinone (CoQ) isoprene intermediates and presents them directly to COQ7, therefore facilitating the COQ7-mediated hydroxylase step. Participates in the biosynthesis of coenzyme Q, also named ubiquinone, an essential lipid-soluble electron transporter for aerobic cellular respiration. The sequence is that of Ubiquinone biosynthesis protein COQ9-A, mitochondrial (coq9-a) from Xenopus laevis (African clawed frog).